Consider the following 349-residue polypeptide: MKFLDQAKVYIRAGDGGAGAVSFRREKFIEFGGPDGGDGGRGGDVWIEAVEGLNTLIDYRYQQHFKAKPGIHGMGRNRTGAKGDDVVLKVPVGTQVYEEDNETLICDLTEVGQRFLLLKGGNGGFGNQHFKSSTNQAPRRANPGLPGEELWIWLRLKLIADAGLIGLPNAGKSTFLATVTAAKPKIADYPFTTLHPNLGVVRIDAREFVLADIPGLIEGAHMGVGIGDRFLGHVERTGVLLHLISAREEDVAATYKTVRRELKAYGHGLSEKPEVVALSQIDLLDEEERREKLAALKKAARRAALPLSSATGEGVQDVLRALMRVVQAAREEERAAETANERWQKQADS.

Positions 1-159 (MKFLDQAKVY…LWIWLRLKLI (159 aa)) constitute an Obg domain. Positions 160-327 (ADAGLIGLPN…VLRALMRVVQ (168 aa)) constitute an OBG-type G domain. GTP is bound by residues 166-173 (GLPNAGKS), 191-195 (FTTLH), 212-215 (DIPG), 279-282 (SQID), and 308-310 (SSA). Mg(2+) contacts are provided by serine 173 and threonine 193.

The protein belongs to the TRAFAC class OBG-HflX-like GTPase superfamily. OBG GTPase family. As to quaternary structure, monomer. Requires Mg(2+) as cofactor.

Its subcellular location is the cytoplasm. In terms of biological role, an essential GTPase which binds GTP, GDP and possibly (p)ppGpp with moderate affinity, with high nucleotide exchange rates and a fairly low GTP hydrolysis rate. Plays a role in control of the cell cycle, stress response, ribosome biogenesis and in those bacteria that undergo differentiation, in morphogenesis control. This is GTPase Obg from Chelativorans sp. (strain BNC1).